A 573-amino-acid chain; its full sequence is Phosphoenolpyruvate-protein phosphotransferase (573 aa).

His190 functions as the Tele-phosphohistidine intermediate in the catalytic mechanism. Arg297 and Arg334 together coordinate phosphoenolpyruvate. Mg(2+) is bound by residues Glu433 and Asp457. Phosphoenolpyruvate is bound by residues 456–457 (ND) and Arg467. Cys504 serves as the catalytic Proton donor.

This sequence belongs to the PEP-utilizing enzyme family. In terms of assembly, homodimer. Requires Mg(2+) as cofactor.

It is found in the cytoplasm. The enzyme catalyses L-histidyl-[protein] + phosphoenolpyruvate = N(pros)-phospho-L-histidyl-[protein] + pyruvate. Functionally, general (non sugar-specific) component of the phosphoenolpyruvate-dependent sugar phosphotransferase system (sugar PTS). This major carbohydrate active-transport system catalyzes the phosphorylation of incoming sugar substrates concomitantly with their translocation across the cell membrane. Enzyme I transfers the phosphoryl group from phosphoenolpyruvate (PEP) to the phosphoryl carrier protein (HPr). The sequence is that of Phosphoenolpyruvate-protein phosphotransferase (ptsI) from Borreliella burgdorferi (strain ATCC 35210 / DSM 4680 / CIP 102532 / B31) (Borrelia burgdorferi).